A 357-amino-acid polypeptide reads, in one-letter code: tRNA-specific 2-thiouridylase MnmA (357 aa).

Residues 3–10 (AMSGGVDS) and Leu29 contribute to the ATP site. The active-site Nucleophile is Cys98. A disulfide bridge links Cys98 with Cys196. Gly122 is an ATP binding site. The interval 146–148 (KDQ) is interaction with tRNA. The Cysteine persulfide intermediate role is filled by Cys196. The interaction with tRNA stretch occupies residues 302-303 (RY).

The protein belongs to the MnmA/TRMU family.

The protein localises to the cytoplasm. The enzyme catalyses S-sulfanyl-L-cysteinyl-[protein] + uridine(34) in tRNA + AH2 + ATP = 2-thiouridine(34) in tRNA + L-cysteinyl-[protein] + A + AMP + diphosphate + H(+). Functionally, catalyzes the 2-thiolation of uridine at the wobble position (U34) of tRNA, leading to the formation of s(2)U34. This is tRNA-specific 2-thiouridylase MnmA from Moorella thermoacetica (strain ATCC 39073 / JCM 9320).